We begin with the raw amino-acid sequence, 140 residues long: Large ribosomal subunit protein uL11 (140 aa).

This sequence belongs to the universal ribosomal protein uL11 family. In terms of assembly, part of the ribosomal stalk of the 50S ribosomal subunit. Interacts with L10 and the large rRNA to form the base of the stalk. L10 forms an elongated spine to which L12 dimers bind in a sequential fashion forming a multimeric L10(L12)X complex. One or more lysine residues are methylated.

Functionally, forms part of the ribosomal stalk which helps the ribosome interact with GTP-bound translation factors. The chain is Large ribosomal subunit protein uL11 from Staphylococcus aureus (strain Mu3 / ATCC 700698).